The chain runs to 120 residues: U13-lycotoxin-Ls1f (120 aa).

A signal peptide spans 1-19 (MKILFVLISILYAVYRFSS). Positions 20–54 (EEDVDSAYLANELEPVEDINSEQYAALEPKEEQER) are excised as a propeptide. Cystine bridges form between C56-C70, C63-C76, C69-C87, and C78-C85. Positions 56–95 (CAGMGQDCKDDCDCCLNIATCNCWFGRYFCSCTFGDYQTC) constitute an Agouti domain.

Belongs to the neurotoxin 05 (agouti) family. Post-translationally, contains 6 disulfide bonds. Expressed by the venom gland.

It is found in the secreted. The chain is U13-lycotoxin-Ls1f from Lycosa singoriensis (Wolf spider).